We begin with the raw amino-acid sequence, 294 residues long: MKTKVIVVIGPTAVGKTALGIDLAQRYNGEIISGDSQQVYRKLDIGTAKASPEEQAAAVHHLIDVRDVTEGYSAYEFVAEAKALIADIKSRGKLPIIVGGTGLYIQSLLEGYHLGGLVDQEQVLAYRAELDCLSDEDLETMAEQAGLMVEGNSRRRIIRGLELKKFGENLENTESGYEPLYICLTDDRQVLYDRINQRVDKMMAAGLLDEVSWLYQEHPEAQAAMGIGYKEFFPYLEGQISLKEAIDNVKQNSRRFAKRQLTWFRNRMAVDFYQVSEEAVKDRIYTAVEEFLDD.

10–17 (GPTAVGKT) is an ATP binding site. Substrate is bound at residue 12–17 (TAVGKT). The tract at residues 35–38 (DSQQ) is interaction with substrate tRNA.

The protein belongs to the IPP transferase family. In terms of assembly, monomer. Mg(2+) is required as a cofactor.

The enzyme catalyses adenosine(37) in tRNA + dimethylallyl diphosphate = N(6)-dimethylallyladenosine(37) in tRNA + diphosphate. In terms of biological role, catalyzes the transfer of a dimethylallyl group onto the adenine at position 37 in tRNAs that read codons beginning with uridine, leading to the formation of N6-(dimethylallyl)adenosine (i(6)A). The polypeptide is tRNA dimethylallyltransferase (Streptococcus suis (strain 98HAH33)).